The chain runs to 377 residues: Succinyl-diaminopimelate desuccinylase (377 aa).

Zn(2+) is bound at residue His-68. Asp-70 is an active-site residue. Residue Asp-101 participates in Zn(2+) binding. The active-site Proton acceptor is Glu-135. Residues Glu-136, Glu-164, and His-350 each contribute to the Zn(2+) site.

It belongs to the peptidase M20A family. DapE subfamily. Homodimer. Zn(2+) is required as a cofactor. Co(2+) serves as cofactor.

The catalysed reaction is N-succinyl-(2S,6S)-2,6-diaminopimelate + H2O = (2S,6S)-2,6-diaminopimelate + succinate. The protein operates within amino-acid biosynthesis; L-lysine biosynthesis via DAP pathway; LL-2,6-diaminopimelate from (S)-tetrahydrodipicolinate (succinylase route): step 3/3. Catalyzes the hydrolysis of N-succinyl-L,L-diaminopimelic acid (SDAP), forming succinate and LL-2,6-diaminopimelate (DAP), an intermediate involved in the bacterial biosynthesis of lysine and meso-diaminopimelic acid, an essential component of bacterial cell walls. In Acinetobacter baylyi (strain ATCC 33305 / BD413 / ADP1), this protein is Succinyl-diaminopimelate desuccinylase.